The primary structure comprises 420 residues: Phospholipase A1-II 3 (420 aa).

The signal sequence occupies residues 1 to 21; sequence MCCFLLVSVLLATTLTDVASA. Residue N231 is glycosylated (N-linked (GlcNAc...) asparagine). The active-site Acyl-ester intermediate is the S240. S240 serves as the catalytic Charge relay system. N-linked (GlcNAc...) asparagine glycosylation occurs at N294. Catalysis depends on charge relay system residues D305 and H343. The stretch at 367–388 forms a coiled coil; it reads VVDRDLALVNKEVDALRDEYQV. Residue N403 is glycosylated (N-linked (GlcNAc...) asparagine).

This sequence belongs to the AB hydrolase superfamily. Lipase family.

The protein localises to the secreted. Functionally, acylhydrolase that catalyzes the hydrolysis of phospholipids at the sn-1 position. The protein is Phospholipase A1-II 3 of Oryza sativa subsp. indica (Rice).